The following is a 550-amino-acid chain: Undecaprenyl phosphate-alpha-4-amino-4-deoxy-L-arabinose arabinosyl transferase 2 (550 aa).

11 helical membrane passes run 4 to 24 (LKPG…PLSF), 81 to 101 (FAVH…VYWL), 110 to 132 (WLGL…GTYA), 176 to 196 (FMTK…PWVI), 204 to 224 (VFIY…PWVI), 255 to 275 (APFW…LGLL), 288 to 308 (TQSG…FFSL), 313 to 333 (LPTY…RYAA), 348 to 368 (LLFG…WGLA), 381 to 401 (VLLG…TLRA), and 409 to 429 (AALC…QQVI).

The protein belongs to the glycosyltransferase 83 family.

It localises to the cell inner membrane. The catalysed reaction is 4-amino-4-deoxy-alpha-L-arabinopyranosyl di-trans,octa-cis-undecaprenyl phosphate + lipid IVA = lipid IIA + di-trans,octa-cis-undecaprenyl phosphate.. Its pathway is lipopolysaccharide metabolism; 4-amino-4-deoxy-beta-L-arabinose-lipid A biosynthesis. Catalyzes the transfer of the L-Ara4N moiety of the glycolipid undecaprenyl phosphate-alpha-L-Ara4N to lipid A. The modified arabinose is attached to lipid A and is required for resistance to polymyxin and cationic antimicrobial peptides. This Sodalis glossinidius (strain morsitans) protein is Undecaprenyl phosphate-alpha-4-amino-4-deoxy-L-arabinose arabinosyl transferase 2.